A 447-amino-acid chain; its full sequence is Cysteine--tRNA ligase (447 aa).

C28 contributes to the Zn(2+) binding site. The short motif at 30–40 is the 'HIGH' region element; it reads PTVYNYIHIGN. The Zn(2+) site is built by C211, H236, and E240. The short motif at 268–272 is the 'KMSKS' region element; sequence KMSKS. K271 contributes to the ATP binding site.

Belongs to the class-I aminoacyl-tRNA synthetase family. Monomer. The cofactor is Zn(2+).

The protein resides in the cytoplasm. The catalysed reaction is tRNA(Cys) + L-cysteine + ATP = L-cysteinyl-tRNA(Cys) + AMP + diphosphate. The sequence is that of Cysteine--tRNA ligase from Streptococcus pyogenes serotype M28 (strain MGAS6180).